The following is an 864-amino-acid chain: Coiled-coil and C2 domain-containing protein 1B (864 aa).

A disordered region spans residues 82–154 (QDCMTDMTGE…VNSSVAEIQH (73 aa)). 2 stretches are compositionally biased toward acidic residues: residues 89-104 (TGED…EELL) and 111-129 (VGEE…EESE). Residues 91-118 (EDDDDDLEEDEELLAELQDVVGEEEEVE) are a coiled coil. Residues 142–154 (EQQVNSSVAEIQH) show a composition bias toward polar residues. Residues 162 to 209 (GMLQVLEERIGNYKEAISNAKLSNESAKARRYERGLKTLESMLSAARQ) adopt a coiled-coil conformation. A disordered region spans residues 218 to 249 (IPPPVACGKPAVSPTTDVPTTDTSKQGLGDLN). A compositionally biased stretch (low complexity) spans 229–241 (VSPTTDVPTTDTS). Positions 385-412 (VGSLLQALQQRMEKYKSAAQQAKSSGDD) form a coiled coil. Disordered regions lie at residues 441–463 (AELP…EEGS) and 478–502 (AGED…PTQL). Over residues 444–453 (PVPPGFPPLP) the composition is skewed to pro residues. Coiled-coil stretches lie at residues 464-488 (VEKA…DEDE) and 535-564 (PAVQ…KNDL). The C2 domain occupies 685–820 (HFEDKTLKIV…ETQCEIREIV (136 aa)).

Belongs to the CC2D1 family.

This Xenopus laevis (African clawed frog) protein is Coiled-coil and C2 domain-containing protein 1B (cc2d1b).